Here is a 96-residue protein sequence, read N- to C-terminus: Protein Vpr (96 aa).

The homooligomerization stretch occupies residues 1–42; the sequence is MEQAPEDQGPQREPYHEWTLELLEELKNEAVRHFPRPWLHGL. A phosphoserine; by host mark is found at S79, S94, and S96.

It belongs to the HIV-1 VPR protein family. In terms of assembly, homooligomer, may form homodimer. Interacts with p6-gag region of the Pr55 Gag precursor protein through a (Leu-X-X)4 motif near the C-terminus of the P6gag protein. Interacts with host UNG. May interact with host RAD23A/HHR23A. Interacts with host VPRBP/DCAF1, leading to hijack the CUL4A-RBX1-DDB1-DCAF1/VPRBP complex, mediating ubiquitination of host proteins such as TERT and ZGPAT and arrest of the cell cycle in G2 phase. In terms of processing, phosphorylated on several residues by host. These phosphorylations regulate VPR activity for the nuclear import of the HIV-1 pre-integration complex.

It is found in the virion. It localises to the host nucleus. The protein localises to the host extracellular space. Its function is as follows. During virus replication, may deplete host UNG protein, and incude G2-M cell cycle arrest. Acts by targeting specific host proteins for degradation by the 26S proteasome, through association with the cellular CUL4A-DDB1 E3 ligase complex by direct interaction with host VPRPB/DCAF-1. Cell cycle arrest reportedly occurs within hours of infection and is not blocked by antiviral agents, suggesting that it is initiated by the VPR carried into the virion. Additionally, VPR induces apoptosis in a cell cycle dependent manner suggesting that these two effects are mechanistically linked. Detected in the serum and cerebrospinal fluid of AIDS patient, VPR may also induce cell death to bystander cells. Functionally, during virus entry, plays a role in the transport of the viral pre-integration (PIC) complex to the host nucleus. This function is crucial for viral infection of non-dividing macrophages. May act directly at the nuclear pore complex, by binding nucleoporins phenylalanine-glycine (FG)-repeat regions. The sequence is that of Protein Vpr from Homo sapiens (Human).